The chain runs to 141 residues: Large ribosomal subunit protein uL11 (141 aa).

Belongs to the universal ribosomal protein uL11 family. Part of the ribosomal stalk of the 50S ribosomal subunit. Interacts with L10 and the large rRNA to form the base of the stalk. L10 forms an elongated spine to which L12 dimers bind in a sequential fashion forming a multimeric L10(L12)X complex. In terms of processing, one or more lysine residues are methylated.

Functionally, forms part of the ribosomal stalk which helps the ribosome interact with GTP-bound translation factors. The chain is Large ribosomal subunit protein uL11 from Lactobacillus johnsonii (strain CNCM I-12250 / La1 / NCC 533).